The primary structure comprises 622 residues: DNA mismatch repair protein MutL (622 aa).

Positions 399–414 (SSQNFHPDENDYRAEE) are enriched in basic and acidic residues. Residues 399–422 (SSQNFHPDENDYRAEEASPAEENP) are disordered.

Belongs to the DNA mismatch repair MutL/HexB family.

Its function is as follows. This protein is involved in the repair of mismatches in DNA. It is required for dam-dependent methyl-directed DNA mismatch repair. May act as a 'molecular matchmaker', a protein that promotes the formation of a stable complex between two or more DNA-binding proteins in an ATP-dependent manner without itself being part of a final effector complex. This Phocaeicola vulgatus (strain ATCC 8482 / DSM 1447 / JCM 5826 / CCUG 4940 / NBRC 14291 / NCTC 11154) (Bacteroides vulgatus) protein is DNA mismatch repair protein MutL.